The primary structure comprises 368 residues: Proton-coupled zinc antiporter SLC30A8 (368 aa).

Residues 1–78 lie on the Cytoplasmic side of the membrane; that stretch reads MEFLERTYLV…AKWRLCAASA (78 aa). Zn(2+) contacts are provided by histidine 51, cysteine 52, and histidine 53. The short motif at 51–53 is the HCH Motif; seals regulatory zinc-binding pocket element; sequence HCH. The chain crosses the membrane as a helical span at residues 79–99; it reads ICFFFMVAEVVGGHVAGSLAV. Residues 100–102 lie on the Lumenal, vesicle side of the membrane; the sequence is LTD. A helical membrane pass occupies residues 103-123; it reads AAHLLIDLTSFLLSLFSLWLS. Residues histidine 105 and aspartate 109 each coordinate Zn(2+). The Cytoplasmic segment spans residues 124 to 139; that stretch reads SRPPSKRLTFGWYRAE. The helical transmembrane segment at 140 to 160 threads the bilayer; the sequence is ILGALLSVLCIWVVTGVLVYL. The Lumenal, vesicle segment spans residues 161–174; sequence ACERLLYPDYQIQA. A helical transmembrane segment spans residues 175-195; it reads GIMITVSGCAVAANIVLTLIL. Residues 196–216 are Cytoplasmic-facing; it reads HQRHLGHNHKDAQANASVRAA. A helical membrane pass occupies residues 217–237; sequence FVHALGDVFQSTSVLISALII. Residues histidine 219 and aspartate 223 each coordinate Zn(2+). Topologically, residues 238–245 are lumenal, vesicle; sequence YFKPDYKM. Residues 246 to 266 form a helical membrane-spanning segment; the sequence is ADPVCTFISSVLALASTVMIL. The Cytoplasmic portion of the chain corresponds to 267 to 368; it reads KDFSILLMEG…SCLLCEDPQD (102 aa). The Zn(2+) site is built by histidine 300, histidine 317, histidine 344, glutamate 351, cysteine 360, and cysteine 363.

This sequence belongs to the cation diffusion facilitator (CDF) transporter (TC 2.A.4) family. SLC30A subfamily. As to quaternary structure, homodimer. In terms of tissue distribution, expressed in endocrine pancreatic islet alpha and beta cells. May be more abundant in beta cells than in alpha cells. Expressed in cubical epithelium lining thyroid follicles (at protein level). In the adrenal gland, detected in the cortex, but not in the medulla (at protein level).

The protein resides in the cytoplasmic vesicle. It is found in the secretory vesicle membrane. The protein localises to the cell membrane. It carries out the reaction Zn(2+)(in) + 2 H(+)(out) = Zn(2+)(out) + 2 H(+)(in). Proton-coupled zinc ion antiporter mediating the entry of zinc into the lumen of pancreatic beta cell secretory granules, thereby regulating insulin secretion. In Rattus norvegicus (Rat), this protein is Proton-coupled zinc antiporter SLC30A8.